The following is a 978-amino-acid chain: Macrophage colony-stimulating factor 1 receptor (978 aa).

Positions 1 to 19 (MELGPPLVLLLATVWHGQG) are cleaved as a signal peptide. Over 20–515 (APVIEPSGPE…QLPDESLFTP (496 aa)) the chain is Extracellular. 5 consecutive Ig-like C2-type domains span residues 24–104 (EPSG…VKDP), 107–197 (SWNL…KVNR), 204–298 (QIKL…VVES), 299–397 (AYLN…LTLR), and 398–503 (YPPE…SLGQ). 3 disulfide bridges follow: C42–C84, C127–C177, and C224–C278. N45 and N73 each carry an N-linked (GlcNAc...) asparagine glycan. 7 N-linked (GlcNAc...) asparagine glycosylation sites follow: N302, N335, N389, N410, N449, N478, and N491. C417 and C483 are oxidised to a cystine. Residues 516–536 (VVVACMSVMSLLVLLLLLLLY) traverse the membrane as a helical segment. The Cytoplasmic segment spans residues 537 to 978 (KYKQKPKYQV…LQPNNYQFAC (442 aa)). The regulatory juxtamembrane domain stretch occupies residues 540-572 (QKPKYQVRWKIIERYEGNSYTFIDPTQLPYNEK). Phosphotyrosine; by autocatalysis occurs at positions 544 and 559. The Protein kinase domain maps to 580-914 (LQFGKTLGAG…CFLLQEQARL (335 aa)). ATP is bound by residues 586–594 (LGAGAFGKV) and K614. Residues Y697 and Y706 each carry the phosphotyrosine; by autocatalysis modification. The residue at position 711 (S711) is a Phosphoserine. At Y721 the chain carries Phosphotyrosine; by autocatalysis. D776 acts as the Proton acceptor in catalysis. The interval 794–816 (DFGLARDIMNDSNYVVKGNARLP) is activation loop. 2 positions are modified to phosphotyrosine; by autocatalysis: Y807 and Y921. The segment at 921–957 (YANLPSSGGSSGSDSGGGSSGGSSSEPEEESSSEHLA) is disordered. Gly residues predominate over residues 929 to 941 (GSSGSDSGGGSSG). Position 974 is a phosphotyrosine; by autocatalysis (Y974).

The protein belongs to the protein kinase superfamily. Tyr protein kinase family. CSF-1/PDGF receptor subfamily. As to quaternary structure, monomer. Homodimer. Interacts with CSF1 and IL34. Interaction with dimeric CSF1 or IL34 leads to receptor homodimerization. Interacts with INPPL1/SHIP2 and THOC5. Interacts (tyrosine phosphorylated) with PLCG2 (via SH2 domain). Interacts (tyrosine phosphorylated) with PIK3R1 (via SH2 domain). Interacts (tyrosine phosphorylated) with FYN, YES1 and SRC (via SH2 domain). Interacts (tyrosine phosphorylated) with CBL, GRB2 and SLA2. Autophosphorylated in response to CSF1 or IL34 binding. Phosphorylation at Tyr-559 is important for normal down-regulation of signaling by ubiquitination, internalization and degradation. Phosphorylation at Tyr-559 and Tyr-807 is important for interaction with SRC family members, including FYN, YES1 and SRC, and for subsequent activation of these protein kinases. Phosphorylation at Tyr-697 and Tyr-921 is important for interaction with GRB2. Phosphorylation at Tyr-721 is important for interaction with PIK3R1. Phosphorylation at Tyr-721 and Tyr-807 is important for interaction with PLCG2. Phosphorylation at Tyr-974 is important for interaction with CBL. Dephosphorylation by PTPN2 negatively regulates downstream signaling and macrophage differentiation. In terms of processing, ubiquitinated. Becomes rapidly polyubiquitinated after autophosphorylation, leading to its degradation.

It localises to the cell membrane. The catalysed reaction is L-tyrosyl-[protein] + ATP = O-phospho-L-tyrosyl-[protein] + ADP + H(+). With respect to regulation, present in an inactive conformation in the absence of bound ligand. CSF1 or IL34 binding leads to dimerization and activation by autophosphorylation on tyrosine residues. Functionally, tyrosine-protein kinase that acts as a cell-surface receptor for CSF1 and IL34 and plays an essential role in the regulation of survival, proliferation and differentiation of hematopoietic precursor cells, especially mononuclear phagocytes, such as macrophages and monocytes. Promotes the release of pro-inflammatory chemokines in response to IL34 and CSF1, and thereby plays an important role in innate immunity and in inflammatory processes. Plays an important role in the regulation of osteoclast proliferation and differentiation, the regulation of bone resorption, and is required for normal bone and tooth development. Required for normal male and female fertility, and for normal development of milk ducts and acinar structures in the mammary gland during pregnancy. Promotes reorganization of the actin cytoskeleton, regulates formation of membrane ruffles, cell adhesion and cell migration, and promotes cancer cell invasion. Activates several signaling pathways in response to ligand binding, including the ERK1/2 and the JNK pathway. Phosphorylates PIK3R1, PLCG2, GRB2, SLA2 and CBL. Activation of PLCG2 leads to the production of the cellular signaling molecules diacylglycerol and inositol 1,4,5-trisphosphate, that then lead to the activation of protein kinase C family members, especially PRKCD. Phosphorylation of PIK3R1, the regulatory subunit of phosphatidylinositol 3-kinase, leads to activation of the AKT1 signaling pathway. Activated CSF1R also mediates activation of the MAP kinases MAPK1/ERK2 and/or MAPK3/ERK1, and of the SRC family kinases SRC, FYN and YES1. Activated CSF1R transmits signals both via proteins that directly interact with phosphorylated tyrosine residues in its intracellular domain, or via adapter proteins, such as GRB2. Promotes activation of STAT family members STAT3, STAT5A and/or STAT5B. Promotes tyrosine phosphorylation of SHC1 and INPP5D/SHIP-1. Receptor signaling is down-regulated by protein phosphatases, such as INPP5D/SHIP-1, that dephosphorylate the receptor and its downstream effectors, and by rapid internalization of the activated receptor. In the central nervous system, may play a role in the development of microglia macrophages. The chain is Macrophage colony-stimulating factor 1 receptor (Csf1r) from Rattus norvegicus (Rat).